Consider the following 597-residue polypeptide: Gamma-terpinene synthase, chloroplastic (597 aa).

The transit peptide at Met-1–Ser-47 directs the protein to the chloroplast. 2 residues coordinate Mn(2+): Asp-350 and Asp-354. A DDXXD motif motif is present at residues Asp-350–Asp-354. Homodimerization stretches follow at residues Tyr-356–Leu-362 and Glu-428–Leu-464. Mn(2+)-binding residues include Asp-494 and Glu-502.

This sequence belongs to the terpene synthase family. In terms of assembly, homodimer. Mn(2+) is required as a cofactor. Mg(2+) serves as cofactor.

It is found in the plastid. It localises to the chloroplast. It catalyses the reaction (2E)-geranyl diphosphate = gamma-terpinene + diphosphate. It functions in the pathway secondary metabolite biosynthesis; terpenoid biosynthesis. In terms of biological role, involved in the biosynthesis of phenolic monoterpenes natural products thymol and carvacrol which have a broad range of biological activities acting as antimicrobial compounds, insecticides, antioxidants and pharmaceutical agents. Monoterpene synthase which catalyzes the conversion of geranyl diphosphate (GPP) to gamma-terpinene. The chain is Gamma-terpinene synthase, chloroplastic from Thymus caespititius (Cretan thyme).